The following is a 412-amino-acid chain: Cellobiose 2-epimerase (412 aa).

This sequence belongs to the cellobiose 2-epimerase family.

The catalysed reaction is D-cellobiose = beta-D-glucosyl-(1-&gt;4)-D-mannopyranose. In terms of biological role, catalyzes the reversible epimerization of cellobiose to 4-O-beta-D-glucopyranosyl-D-mannose (Glc-Man). Can also use lactose, epilactose, mannobiose and cellotriose. Highly specific for oligosaccharides linked by the beta-1,4-glycosidic linkage. Shows preference for lactose. The sequence is that of Cellobiose 2-epimerase (ce) from Rhodothermus marinus (Rhodothermus obamensis).